A 134-amino-acid polypeptide reads, in one-letter code: Endoribonuclease YbeY (134 aa).

3 residues coordinate Zn(2+): histidine 94, histidine 98, and histidine 104.

Belongs to the endoribonuclease YbeY family. Requires Zn(2+) as cofactor.

The protein resides in the cytoplasm. In terms of biological role, single strand-specific metallo-endoribonuclease involved in late-stage 70S ribosome quality control and in maturation of the 3' terminus of the 16S rRNA. This chain is Endoribonuclease YbeY, found in Campylobacter fetus subsp. fetus (strain 82-40).